Consider the following 149-residue polypeptide: Calmodulin-1 (149 aa).

EF-hand domains follow at residues 8–43 (EQISEFKEAFSLFDKDGDGCITTKELGTVMRSLGQN), 44–79 (PTEAELQDMINEVDADGNGTIDFPEFLNLMAKKMKD), 81–116 (DSEEELKEAFRVFDKDQNGFISAAELRHVMTNLGEK), and 117–149 (LTDEEVEEMIREADVDGDGQINYEEFVKIMMAK). Residues Asp21, Asp23, Asp25, Cys27, Glu32, Asp57, Asp59, Asn61, Thr63, Glu68, Asp94, Asp96, Asn98, Glu105, Asp130, Asp132, Asp134, Gln136, and Glu141 each coordinate Ca(2+).

The protein belongs to the calmodulin family. Interacts with ZAR1 (via CaMBD domain). Binds to IQD1. Binds to MEE62 in a calcium-dependent manner.

The protein localises to the cytoplasm. It is found in the cell membrane. Calmodulin mediates the control of a large number of enzymes, ion channels and other proteins by Ca(2+). Among the enzymes to be stimulated by the calmodulin-Ca(2+) complex are a number of protein kinases and phosphatases. This chain is Calmodulin-1 (CAM1), found in Arabidopsis thaliana (Mouse-ear cress).